The following is a 205-amino-acid chain: Ephrin-A1 (205 aa).

An N-terminal signal peptide occupies residues methionine 1–alanine 18. Residues aspartate 19–isoleucine 151 form the Ephrin RBD domain. N-linked (GlcNAc...) asparagine glycosylation is present at asparagine 26. 2 cysteine pairs are disulfide-bonded: cysteine 51/cysteine 92 and cysteine 80/cysteine 140. Serine 182 carries the GPI-anchor amidated serine lipid modification. Residues alanine 183–proline 205 constitute a propeptide, removed in mature form.

This sequence belongs to the ephrin family. In terms of assembly, monomer. Homodimer. Forms heterodimers with EPHA2. Binds to the receptor tyrosine kinases EPHA2, EPHA3, EPHA4, EPHA5, EPHA6 and EPHA7. Also binds with low affinity to EPHA1. Post-translationally, undergoes proteolysis by a metalloprotease to give rise to a soluble monomeric form. N-Glycosylation is required for binding to EPHA2 receptor and inducing its internalization. In terms of tissue distribution, brain. Down-regulated in primary glioma tissues compared to the normal tissues. The soluble monomeric form is expressed in the glioblastoma multiforme (GBM) and breast cancer cells (at protein level).

Its subcellular location is the cell membrane. It localises to the secreted. Its function is as follows. Cell surface GPI-bound ligand for Eph receptors, a family of receptor tyrosine kinases which are crucial for migration, repulsion and adhesion during neuronal, vascular and epithelial development. Binds promiscuously Eph receptors residing on adjacent cells, leading to contact-dependent bidirectional signaling into neighboring cells. Plays an important role in angiogenesis and tumor neovascularization. The recruitment of VAV2, VAV3 and PI3-kinase p85 subunit by phosphorylated EPHA2 is critical for EFNA1-induced RAC1 GTPase activation and vascular endothelial cell migration and assembly. Exerts anti-oncogenic effects in tumor cells through activation and down-regulation of EPHA2. Activates EPHA2 by inducing tyrosine phosphorylation which leads to its internalization and degradation. Acts as a negative regulator in the tumorigenesis of gliomas by down-regulating EPHA2 and FAK. Can evoke collapse of embryonic neuronal growth cone and regulates dendritic spine morphogenesis. This chain is Ephrin-A1 (EFNA1), found in Homo sapiens (Human).